We begin with the raw amino-acid sequence, 767 residues long: 5-methyltetrahydropteroyltriglutamate--homocysteine methyltransferase (767 aa).

Position 19 (lysine 19) interacts with 5-methyltetrahydropteroyltri-L-glutamate. Serine 89 carries the phosphoserine modification. Residue asparagine 126 coordinates 5-methyltetrahydropteroyltri-L-glutamate. Residue serine 242 is modified to Phosphoserine. L-homocysteine-binding positions include 444–446 and glutamate 497; that span reads IGS. Residues 444–446 and glutamate 497 each bind L-methionine; that span reads IGS. 5-methyltetrahydropteroyltri-L-glutamate contacts are provided by residues aspartate 502, tyrosine 525, and 528 to 529; that span reads RY. At threonine 566 the chain carries Phosphothreonine. Tryptophan 574 contributes to the 5-methyltetrahydropteroyltri-L-glutamate binding site. Aspartate 612 contributes to the L-homocysteine binding site. Position 612 (aspartate 612) interacts with L-methionine. Serine 629 is subject to Phosphoserine. Residues histidine 655, cysteine 657, and glutamate 677 each coordinate Zn(2+). Histidine 705 (proton donor) is an active-site residue. Serine 706 is modified (phosphoserine). Residue cysteine 737 coordinates Zn(2+).

Belongs to the vitamin-B12 independent methionine synthase family. The cofactor is Zn(2+).

It carries out the reaction 5-methyltetrahydropteroyltri-L-glutamate + L-homocysteine = tetrahydropteroyltri-L-glutamate + L-methionine. It participates in amino-acid biosynthesis; L-methionine biosynthesis via de novo pathway; L-methionine from L-homocysteine (MetE route): step 1/1. Its function is as follows. Catalyzes the transfer of a methyl group from 5-methyltetrahydrofolate to homocysteine resulting in methionine formation. This Saccharomyces cerevisiae (strain ATCC 204508 / S288c) (Baker's yeast) protein is 5-methyltetrahydropteroyltriglutamate--homocysteine methyltransferase (MET6).